The primary structure comprises 231 residues: MKVLIHGTGVMSSILKEVIEKEGELEISGFADDFTNEKGDMIIDFSHFSRLPAMIDYSIKNNIPMVICTTGYDETMLAKIVEASTHVPIVLSSNTCIGINLMNEIVSKIAPQLRNFDIEIIETHHNRKVDSPSGTAKSLFNVINDALDNEMFLVSGRNGLHVRDKKEIGMHSVRGGSVVGDHSVIFYGDDEIIEIKHSSTSRRIFANGAIKAAKFLVGKKPGLYRMKEVLA.

NAD(+) contacts are provided by residues Asp33, 68–70 (CTT), and 92–95 (SSNT). The active-site Proton donor/acceptor is the His124. His125 provides a ligand contact to (S)-2,3,4,5-tetrahydrodipicolinate. The Proton donor role is filled by Lys128. Residue 134-135 (GT) coordinates (S)-2,3,4,5-tetrahydrodipicolinate.

It belongs to the DapB family.

The protein resides in the cytoplasm. It catalyses the reaction (S)-2,3,4,5-tetrahydrodipicolinate + NAD(+) + H2O = (2S,4S)-4-hydroxy-2,3,4,5-tetrahydrodipicolinate + NADH + H(+). It carries out the reaction (S)-2,3,4,5-tetrahydrodipicolinate + NADP(+) + H2O = (2S,4S)-4-hydroxy-2,3,4,5-tetrahydrodipicolinate + NADPH + H(+). It functions in the pathway amino-acid biosynthesis; L-lysine biosynthesis via DAP pathway; (S)-tetrahydrodipicolinate from L-aspartate: step 4/4. In terms of biological role, catalyzes the conversion of 4-hydroxy-tetrahydrodipicolinate (HTPA) to tetrahydrodipicolinate. The chain is 4-hydroxy-tetrahydrodipicolinate reductase from Brachyspira hyodysenteriae (strain ATCC 49526 / WA1).